The sequence spans 466 residues: Ribulose bisphosphate carboxylase large chain (466 aa).

Lys5 is modified (N6,N6,N6-trimethyllysine). Substrate is bound by residues Asn114 and Thr164. Lys166 serves as the catalytic Proton acceptor. Lys168 contributes to the substrate binding site. Lys192, Asp194, and Glu195 together coordinate Mg(2+). An N6-carboxylysine modification is found at Lys192. Catalysis depends on His285, which acts as the Proton acceptor. Residues Arg286, His318, and Ser370 each coordinate substrate.

Belongs to the RuBisCO large chain family. Type I subfamily. In terms of assembly, heterohexadecamer of 8 large chains and 8 small chains. Requires Mg(2+) as cofactor.

It localises to the plastid. It is found in the chloroplast. The catalysed reaction is 2 (2R)-3-phosphoglycerate + 2 H(+) = D-ribulose 1,5-bisphosphate + CO2 + H2O. It catalyses the reaction D-ribulose 1,5-bisphosphate + O2 = 2-phosphoglycolate + (2R)-3-phosphoglycerate + 2 H(+). RuBisCO catalyzes two reactions: the carboxylation of D-ribulose 1,5-bisphosphate, the primary event in carbon dioxide fixation, as well as the oxidative fragmentation of the pentose substrate in the photorespiration process. Both reactions occur simultaneously and in competition at the same active site. In Cornus kousa (Kousa dogwood), this protein is Ribulose bisphosphate carboxylase large chain.